A 575-amino-acid polypeptide reads, in one-letter code: Urease subunit alpha (575 aa).

The Urease domain occupies 138-575; that stretch reads GAVDCHVHLI…LPMAQRYFLF (438 aa). 3 residues coordinate Ni(2+): His-143, His-145, and Lys-226. Lys-226 carries the post-translational modification N6-carboxylysine. A substrate-binding site is contributed by His-228. Residues His-255 and His-281 each contribute to the Ni(2+) site. Catalysis depends on His-329, which acts as the Proton donor. Asp-369 provides a ligand contact to Ni(2+).

The protein belongs to the metallo-dependent hydrolases superfamily. Urease alpha subunit family. As to quaternary structure, heterotrimer of UreA (gamma), UreB (beta) and UreC (alpha) subunits. Three heterotrimers associate to form the active enzyme. It depends on Ni cation as a cofactor. Post-translationally, carboxylation allows a single lysine to coordinate two nickel ions.

It is found in the cytoplasm. The enzyme catalyses urea + 2 H2O + H(+) = hydrogencarbonate + 2 NH4(+). It participates in nitrogen metabolism; urea degradation; CO(2) and NH(3) from urea (urease route): step 1/1. This Frankia alni (strain DSM 45986 / CECT 9034 / ACN14a) protein is Urease subunit alpha.